The sequence spans 441 residues: MPPQQEQDTDSDAIRSYNEESKSETPGCIPDAMLSSDETSNDVASDISPPPDGGWNAWLCTLCGHFLFMNTWGFINSFGIFQTYYTTFLDRDPSDISWIGSIQVFLSFFVGAFVGRYIDSGHLRLVLSCGTILVLIGIFTASLSTQYWQLILSQGICCGLGNGFLVTPAVSVTSTYFAKRRSLAIGISTCGSVTGALVFNSMARQLLPTAGFGWTMRAIGFVQAATLLFVVVAMKTRLPPTKSGRLVEWVAFKQLDYTFFTIGMFFNFWAVFFGYYYIAPYSRDIITPTLTYTQSLNLLLILNGVGVFGRMIANHYADTFGPLELLIPTCLVAAVATFSWIAVDTPTHAYVWTVFYGIIGGSILSLFPAGISCLTTDLSTRGAYIGMNFTVISFATLTGNPIAGAIITAMQGRYYGAQAFMGSSFIVGTAFIVAAKMNHVK.

The interval 1–47 is disordered; that stretch reads MPPQQEQDTDSDAIRSYNEESKSETPGCIPDAMLSSDETSNDVASDI. 10 helical membrane passes run 61 to 81, 95 to 115, 125 to 145, 150 to 170, 183 to 203, 212 to 232, 259 to 279, 289 to 309, 323 to 343, and 351 to 371; these read TLCGHFLFMNTWGFINSFGIF, DISWIGSIQVFLSFFVGAFVG, LVLSCGTILVLIGIFTASLST, LILSQGICCGLGNGFLVTPAV, LAIGISTCGSVTGALVFNSMA, FGWTMRAIGFVQAATLLFVVV, FFTIGMFFNFWAVFFGYYYIA, TLTYTQSLNLLLILNGVGVFG, LELLIPTCLVAAVATFSWIAV, and VWTVFYGIIGGSILSLFPAGI. The N-linked (GlcNAc...) asparagine glycan is linked to Asn-388. 2 helical membrane passes run 389–409 and 415–435; these read FTVISFATLTGNPIAGAIITA and YGAQAFMGSSFIVGTAFIVAA.

It belongs to the major facilitator superfamily. Monocarboxylate porter (TC 2.A.1.13) family.

It is found in the membrane. MFS-type transporter; part of the gene cluster that mediates the biosynthesis of butenolide, a mycotoxin that shows antibiotic activity but does not seem to play a major role in the spread of head blight in wheat. The sequence is that of MFS-type transporter from Gibberella zeae (strain ATCC MYA-4620 / CBS 123657 / FGSC 9075 / NRRL 31084 / PH-1) (Wheat head blight fungus).